The sequence spans 633 residues: MSCQISCKSRIGGGGGFRSFSSGSAVVSGGSRRSTRSFSCLSRHGGGGGGAGGGGFGSRSLVGLGGTKSISISVAGGGGSFGSGGGFGGRGGGFGGGSGFGGGSGFGGGGFGGGGFGGGSGFGGGGFGGGGFGGGRFGGGGGLGGFGGPGGFGPGGFPGGGIHEVSINESLLQPLNVKVDPEIQNVKSQEREQIKTLNNKFASFIDKVRFLEQQNQVLQTKWELLQQLDVSTRTTNLEPIFQAYIAKLKKYVDTLSAERTSQGSELNNMQDLVEDFKKKYEDEINKRTAAENDFVTLKKDVDNNYMTKVELQAKTDVLTQELEFIKFLFDXELSQMQTQISETNVTLSMDNNRSLDLDSIISEVKAQYEEIAQKSKAEAEALYHSKYEELQVTAGKHGDSLKEVKMEISELNRMIQRLQGEIAHVKKQCKSVQEAIAEAEQKGEHAVKDAQGKLSDLEEALQQAREDLAGLLRDYQELMNVKLALDVEIATYRKLLEGEECRMSGDLSSNVTVSVTSSSMSSSMTSRGGFGGYGSGGRGSSSGGGGFSSGSGSYSSGGRGSSSRGGGGGGYGSGGGSGGKYSSGGGSRGGSGSGGGYGSSSGGGYGSGGGSRGGFSSQKGGSGSGSSVTFSFR.

Residues 1 to 189 form a head region; sequence MSCQISCKSR…DPEIQNVKSQ (189 aa). Arg18 carries the asymmetric dimethylarginine modification. Residues Ser21, Ser24, and Ser60 each carry the phosphoserine modification. The tract at residues 190–225 is coil 1A; sequence EREQIKTLNNKFASFIDKVRFLEQQNQVLQTKWELL. The IF rod domain maps to 190 to 503; sequence EREQIKTLNN…KLLEGEECRM (314 aa). The linker 1 stretch occupies residues 226 to 244; the sequence is QQLDVSTRTTNLEPIFQAY. The tract at residues 245 to 336 is coil 1B; sequence IAKLKKYVDT…FLFDXELSQM (92 aa). Residues 337 to 360 form a linker 12 region; sequence QTQISETNVTLSMDNNRSLDLDSI. The coil 2 stretch occupies residues 361-499; sequence ISEVKAQYEE…ATYRKLLEGE (139 aa). The tract at residues 500 to 633 is tail; sequence ECRMSGDLSS…SGSSVTFSFR (134 aa). Residues 518 to 527 show a composition bias toward low complexity; it reads SSMSSSMTSR. The tract at residues 518–633 is disordered; sequence SSMSSSMTSR…SGSSVTFSFR (116 aa). A compositionally biased stretch (gly residues) spans 528-613; sequence GGFGGYGSGG…GYGSGGGSRG (86 aa). Residues Arg588 and Arg612 each carry the omega-N-methylarginine modification.

This sequence belongs to the intermediate filament family. As to quaternary structure, heterotetramer of two type I and two type II keratins. Associates with KRT10.

It localises to the cytoplasm. Functionally, probably contributes to terminal cornification. Associated with keratinocyte activation, proliferation and keratinization. Required for maintenance of corneocytes and keratin filaments in suprabasal keratinocytes in the epidermis of the ear, potentially via moderation of expression and localization of keratins and their partner proteins. Plays a role in the establishment of the epidermal barrier on plantar skin. This chain is Keratin, type II cytoskeletal 2 epidermal (KRT2), found in Canis lupus familiaris (Dog).